A 765-amino-acid chain; its full sequence is 5-methyltetrahydropteroyltriglutamate--homocysteine methyltransferase (765 aa).

Residues 18 to 21 (REWK) and K114 contribute to the 5-methyltetrahydropteroyltri-L-glutamate site. L-homocysteine is bound by residues 437–439 (IGS) and E490. L-methionine-binding positions include 437-439 (IGS) and E490. Residue W567 participates in 5-methyltetrahydropteroyltri-L-glutamate binding. D605 serves as a coordination point for L-homocysteine. An L-methionine-binding site is contributed by D605. Residue E611 participates in 5-methyltetrahydropteroyltri-L-glutamate binding. Residues H647, C649, and E671 each coordinate Zn(2+). The active-site Proton donor is the H700. C732 is a Zn(2+) binding site.

It belongs to the vitamin-B12 independent methionine synthase family. It depends on Zn(2+) as a cofactor.

It carries out the reaction 5-methyltetrahydropteroyltri-L-glutamate + L-homocysteine = tetrahydropteroyltri-L-glutamate + L-methionine. It functions in the pathway amino-acid biosynthesis; L-methionine biosynthesis via de novo pathway; L-methionine from L-homocysteine (MetE route): step 1/1. In terms of biological role, catalyzes the transfer of a methyl group from 5-methyltetrahydrofolate to homocysteine resulting in methionine formation. This chain is 5-methyltetrahydropteroyltriglutamate--homocysteine methyltransferase, found in Listeria monocytogenes serotype 4b (strain F2365).